Consider the following 421-residue polypeptide: Signal recognition particle receptor FtsY (421 aa).

The segment covering 1-10 (MFSFFRRKKK) has biased composition (basic residues). The disordered stretch occupies residues 1 to 22 (MFSFFRRKKKQETPAPEEAQIQ). GTP-binding positions include 228–235 (GINGAGKT), 309–313 (DTAGR), and 373–376 (TKLD).

Belongs to the GTP-binding SRP family. FtsY subfamily. In terms of assembly, part of the signal recognition particle protein translocation system, which is composed of SRP and FtsY. SRP is a ribonucleoprotein composed of Ffh and a 4.5S RNA molecule.

The protein localises to the cell membrane. It is found in the cytoplasm. The catalysed reaction is GTP + H2O = GDP + phosphate + H(+). Involved in targeting and insertion of nascent membrane proteins into the cytoplasmic membrane. Acts as a receptor for the complex formed by the signal recognition particle (SRP) and the ribosome-nascent chain (RNC). Interaction with SRP-RNC leads to the transfer of the RNC complex to the Sec translocase for insertion into the membrane, the hydrolysis of GTP by both Ffh and FtsY, and the dissociation of the SRP-FtsY complex into the individual components. This chain is Signal recognition particle receptor FtsY, found in Neisseria meningitidis serogroup C.